Reading from the N-terminus, the 227-residue chain is MTIQKGIITLTILIFISGLLTAFLLLDDSHLSFFRAQQNQRKHYVERTLQLQKMTATKKQTACLDLPLNNNESVKQISIALEGSTDAIQYFLWCERMSLFKKSPKKGDNQGALKDFVTDEKLAYFRPHFSSPPRILNANKMPKLYWFSDSQAEVEINGTVSAVLIAEGDLKLTGKGRISGAVITSGNLTLDGVTLAYGKKTVVALVQQYSQWQLAEKSWSDFNVQDE.

The helical transmembrane segment at 7-26 (IITLTILIFISGLLTAFLLL) threads the bilayer.

Its subcellular location is the membrane. This is an uncharacterized protein from Haemophilus influenzae (strain ATCC 51907 / DSM 11121 / KW20 / Rd).